The primary structure comprises 439 residues: UDP-N-acetylmuramate--L-alanine ligase (439 aa).

Residue 113 to 119 (GSHGKTS) coordinates ATP.

It belongs to the MurCDEF family.

Its subcellular location is the cytoplasm. It catalyses the reaction UDP-N-acetyl-alpha-D-muramate + L-alanine + ATP = UDP-N-acetyl-alpha-D-muramoyl-L-alanine + ADP + phosphate + H(+). It functions in the pathway cell wall biogenesis; peptidoglycan biosynthesis. Functionally, cell wall formation. This chain is UDP-N-acetylmuramate--L-alanine ligase, found in Lactobacillus delbrueckii subsp. bulgaricus (strain ATCC 11842 / DSM 20081 / BCRC 10696 / JCM 1002 / NBRC 13953 / NCIMB 11778 / NCTC 12712 / WDCM 00102 / Lb 14).